Reading from the N-terminus, the 265-residue chain is UDP-N-acetylenolpyruvoylglucosamine reductase (265 aa).

The FAD-binding PCMH-type domain maps to 15-169 (GVGGPAELWT…TRVRLKLKER (155 aa)). The active site involves arginine 149. Residues 182-203 (DRARKGQPKRKSAGCAFKNPPG) form a disordered region. The Proton donor role is filled by cysteine 196.

Belongs to the MurB family. FAD is required as a cofactor.

The protein localises to the cytoplasm. The enzyme catalyses UDP-N-acetyl-alpha-D-muramate + NADP(+) = UDP-N-acetyl-3-O-(1-carboxyvinyl)-alpha-D-glucosamine + NADPH + H(+). The protein operates within cell wall biogenesis; peptidoglycan biosynthesis. Its function is as follows. Cell wall formation. The chain is UDP-N-acetylenolpyruvoylglucosamine reductase from Thermus thermophilus (strain ATCC 27634 / DSM 579 / HB8).